A 238-amino-acid chain; its full sequence is Capsular polysaccharide phosphotransferase eps5J (238 aa).

Belongs to the stealth family.

The sequence is that of Capsular polysaccharide phosphotransferase eps5J (eps5J) from Streptococcus thermophilus.